The following is a 59-amino-acid chain: MAVQQNRKSRSRRGMRRSHDALSSAALSIDPTTGEKHRRHHVTPDGFYRGKKVVEVSQD.

Positions 1–59 (MAVQQNRKSRSRRGMRRSHDALSSAALSIDPTTGEKHRRHHVTPDGFYRGKKVVEVSQD) are disordered. The span at 7-16 (RKSRSRRGMR) shows a compositional bias: basic residues.

It belongs to the bacterial ribosomal protein bL32 family.

This Hahella chejuensis (strain KCTC 2396) protein is Large ribosomal subunit protein bL32.